Consider the following 215-residue polypeptide: Cytochrome b6 (215 aa).

The chain crosses the membrane as a helical span at residues 32–52 (IFYCLGGITLTCFLVQVATGF). A heme c-binding site is contributed by Cys-35. Heme b contacts are provided by His-86 and His-100. The next 3 membrane-spanning stretches (helical) occupy residues 90 to 110 (ASMM…TGGF), 116 to 136 (LTWV…VTGY), and 186 to 206 (LHTF…FPMI). 2 residues coordinate heme b: His-187 and His-202.

This sequence belongs to the cytochrome b family. PetB subfamily. As to quaternary structure, the 4 large subunits of the cytochrome b6-f complex are cytochrome b6, subunit IV (17 kDa polypeptide, PetD), cytochrome f and the Rieske protein, while the 4 small subunits are PetG, PetL, PetM and PetN. The complex functions as a dimer. Requires heme b as cofactor. Heme c is required as a cofactor.

It is found in the plastid. It localises to the chloroplast thylakoid membrane. Its function is as follows. Component of the cytochrome b6-f complex, which mediates electron transfer between photosystem II (PSII) and photosystem I (PSI), cyclic electron flow around PSI, and state transitions. The polypeptide is Cytochrome b6 (Populus alba (White poplar)).